A 122-amino-acid polypeptide reads, in one-letter code: Large ribosomal subunit protein bL12 (122 aa).

It belongs to the bacterial ribosomal protein bL12 family. As to quaternary structure, homodimer. Part of the ribosomal stalk of the 50S ribosomal subunit. Forms a multimeric L10(L12)X complex, where L10 forms an elongated spine to which 2 to 4 L12 dimers bind in a sequential fashion. Binds GTP-bound translation factors.

Its function is as follows. Forms part of the ribosomal stalk which helps the ribosome interact with GTP-bound translation factors. Is thus essential for accurate translation. This Staphylococcus haemolyticus (strain JCSC1435) protein is Large ribosomal subunit protein bL12.